A 970-amino-acid polypeptide reads, in one-letter code: Serine/threonine-protein kinase PLK4 (970 aa).

In terms of domain architecture, Protein kinase spans 12 to 265; that stretch reads FKVGNLLGKG…LSSVLDHPFM (254 aa). ATP contacts are provided by residues 18-26 and K41; that span reads LGKGSFAGV. 2 positions are modified to N6-acetyllysine: K45 and K46. Residue D136 is the Proton acceptor of the active site. The disordered stretch occupies residues 324–373; it reads VFPKNKSSSDFSSSGDGNSFYTQWGNQETSNSGRGRVIQDAEERPHSRYL. The span at 327-343 shows a compositional bias: low complexity; sequence KNKSSSDFSSSGDGNSF. Residues 344-356 are compositionally biased toward polar residues; it reads YTQWGNQETSNSG. Over residues 360 to 369 the composition is skewed to basic and acidic residues; it reads VIQDAEERPH. Position 401 is a phosphoserine (S401). Residues 498 to 540 are disordered; it reads ISPTRDFQGHPDLQKDTSKNAWTDTKVKKNSDASDNAHSVKQP. The span at 504 to 515 shows a compositional bias: basic and acidic residues; sequence FQGHPDLQKDTS. Positions 530 to 540 are enriched in polar residues; it reads ASDNAHSVKQP. The Cryptic POLO box 1 (CPB1) domain maps to 586 to 699; it reads TLRSITSPLV…SRFVQLVRSK (114 aa). S665 carries the post-translational modification Phosphoserine. Positions 700–813 constitute a Cryptic POLO box 2 (CPB2) domain; that stretch reads SPKITYFTRY…GRKPGSTSSP (114 aa). Positions 808–829 are disordered; it reads GSTSSPKALSPPPSVDSNYPTR. Position 817 is a phosphoserine (S817). The POLO box domain occupies 886-964; the sequence is QLLKSVFVKN…LSSILLMFSN (79 aa).

It belongs to the protein kinase superfamily. Ser/Thr protein kinase family. CDC5/Polo subfamily. Homodimer. Interacts with CEP152 (via N-terminus). Interacts with CEP78; this interaction may be important for proper PLK4 localization to the centriole and PLK4-induced overduplication of centrioles. Interacts with CEP131. Interacts simultaneously with TENT5C and CEP192. Interacts with TENT5C; this interaction leads to the TENT5C recruitment in the centrosome. Interacts with CEP85; this interaction may be important in cell migration and centriole assembly. Ubiquitinated; leading to its degradation by the proteasome. Deubiquitinated by USP54; leading to PLK4 stabilization. In terms of processing, tyrosine-phosphorylated by TEC. Post-translationally, acetylation by KAT2A and KAT2B impairs kinase activity by shifting the kinase to an inactive conformation.

The protein resides in the cytoplasm. Its subcellular location is the cytoskeleton. It localises to the microtubule organizing center. It is found in the centrosome. The protein localises to the centriole. The protein resides in the nucleus. Its subcellular location is the nucleolus. It localises to the cleavage furrow. It carries out the reaction L-seryl-[protein] + ATP = O-phospho-L-seryl-[protein] + ADP + H(+). The enzyme catalyses L-threonyl-[protein] + ATP = O-phospho-L-threonyl-[protein] + ADP + H(+). In terms of biological role, serine/threonine-protein kinase that plays a central role in centriole duplication. Able to trigger procentriole formation on the surface of the parental centriole cylinder, leading to the recruitment of centriole biogenesis proteins such as SASS6, CPAP, CCP110, CEP135 and gamma-tubulin. When overexpressed, it is able to induce centrosome amplification through the simultaneous generation of multiple procentrioles adjoining each parental centriole during S phase. Phosphorylates 'Ser-151' of FBXW5 during the G1/S transition, leading to inhibit FBXW5 ability to ubiquitinate SASS6. Its central role in centriole replication suggests a possible role in tumorigenesis, centrosome aberrations being frequently observed in tumors. Also involved in deuterosome-mediated centriole amplification in multiciliated that can generate more than 100 centrioles. Also involved in trophoblast differentiation by phosphorylating HAND1, leading to disrupt the interaction between HAND1 and MDFIC and activate HAND1. Phosphorylates CDC25C and CHEK2. Required for the recruitment of STIL to the centriole and for STIL-mediated centriole amplification. Phosphorylates CEP131 and PCM1 which is essential for proper organization and integrity of centriolar satellites. The sequence is that of Serine/threonine-protein kinase PLK4 from Pongo abelii (Sumatran orangutan).